The following is a 403-amino-acid chain: G2/mitotic-specific cyclin-B3 (403 aa).

Disordered stretches follow at residues 1 to 86 (MPVA…APPA) and 102 to 122 (RKTP…PEEP). The segment covering 7–25 (SKAQSSKQPRASKAPSVTE) has biased composition (polar residues). Positions 51 to 59 (RSAFGDITN) match the D-box motif.

The protein belongs to the cyclin family. Cyclin AB subfamily. As to quaternary structure, interacts with the CDK1 and CDK2 protein kinases. In terms of processing, ubiquitinated, leading to its degradation.

The protein localises to the nucleus. In terms of biological role, cyclins are positive regulatory subunits of the cyclin-dependent kinases (CDKs), and thereby play an essential role in the control of the cell cycle, notably via their destruction during cell division. Could be involved at the G2/M (mitosis or meiosis) transition. G2/M cyclins accumulate steadily during G2 and are abruptly destroyed at mitosis. This Gallus gallus (Chicken) protein is G2/mitotic-specific cyclin-B3 (CCNB3).